We begin with the raw amino-acid sequence, 681 residues long: Mating-type protein beta1-1 (681 aa).

A DNA-binding region (homeobox; TALE-type) is located at residues 165-227 (DKNEPTSPTP…DARRRIGWNE (63 aa)). Over residues 307–318 (LKNDEARRKREA) the composition is skewed to basic and acidic residues. Disordered stretches follow at residues 307–341 (LKNDEARRKREASTVGIINQRARHAYPTPERSPAS), 353–381 (AIDSDKLPSVGRKRRRSLESDETVSSPLC), and 394–466 (SPVK…SDPF). Over residues 413–430 (TSAAPSPQPSLLPKLTPT) the composition is skewed to low complexity.

The protein belongs to the TALE/M-ATYP homeobox family. May dimerize.

It localises to the nucleus. Has a major regulatory role in sexual and asexual development. It may bind DNA itself or it may have a role in preventing DNA-binding of another protein. This chain is Mating-type protein beta1-1, found in Coprinopsis cinerea (Inky cap fungus).